The following is a 114-amino-acid chain: uncharacterized protein (114 aa).

Basic and acidic residues predominate over residues 1-20 (MGLSRWHDKNSRPAEEKSEE). Positions 1-22 (MGLSRWHDKNSRPAEEKSEEMQ) are disordered.

Its function is as follows. May be involved in phosphatase regulation and/or generation of precursor metabolites and energy. This is an uncharacterized protein from Saccharomyces cerevisiae (strain ATCC 204508 / S288c) (Baker's yeast).